Here is a 486-residue protein sequence, read N- to C-terminus: Keratin-3, type I cytoskeletal 51 kDa (486 aa).

The head stretch occupies residues 1-125 (MSNYSIKQSA…AGGMDIFSTN (125 aa)). The interval 126-161 (EKQTMQNLNDRLASYLDKVHALETANTELERKIKEW) is coil 1A. Residues 126–442 (EKQTMQNLND…RLLDGDLSKP (317 aa)) form the IF rod domain. The tract at residues 162-184 (YEKQRPGSSSGDGAKDYSKYYTM) is linker 1. The tract at residues 185 to 276 (INDLKNQIIA…KNHEDELKGM (92 aa)) is coil 1B. The segment at 277-299 (QVTQVGQVNVEMNAAPSSDLTKI) is linker 12. The interval 300–438 (LNDMRSQYED…ETYRRLLDGD (139 aa)) is coil 2. Positions 435–466 (LDGDLSKPKSGGGTSTNTGSTSSKGSTRTVKR) are disordered. Residues 439 to 486 (LSKPKSGGGTSTNTGSTSSKGSTRTVKRREIIEEVVDGKVVSTKVVDM) are tail. Residues 449–461 (STNTGSTSSKGST) are compositionally biased toward low complexity.

The protein belongs to the intermediate filament family. In terms of assembly, heterotetramer of two type I and two type II keratins.

The chain is Keratin-3, type I cytoskeletal 51 kDa from Xenopus laevis (African clawed frog).